A 240-amino-acid chain; its full sequence is 1-(5-phosphoribosyl)-5-[(5-phosphoribosylamino)methylideneamino] imidazole-4-carboxamide isomerase (240 aa).

Asp-8 serves as the catalytic Proton acceptor. Residue Asp-129 is the Proton donor of the active site.

It belongs to the HisA/HisF family.

The protein localises to the cytoplasm. The catalysed reaction is 1-(5-phospho-beta-D-ribosyl)-5-[(5-phospho-beta-D-ribosylamino)methylideneamino]imidazole-4-carboxamide = 5-[(5-phospho-1-deoxy-D-ribulos-1-ylimino)methylamino]-1-(5-phospho-beta-D-ribosyl)imidazole-4-carboxamide. The protein operates within amino-acid biosynthesis; L-histidine biosynthesis; L-histidine from 5-phospho-alpha-D-ribose 1-diphosphate: step 4/9. The sequence is that of 1-(5-phosphoribosyl)-5-[(5-phosphoribosylamino)methylideneamino] imidazole-4-carboxamide isomerase from Dinoroseobacter shibae (strain DSM 16493 / NCIMB 14021 / DFL 12).